We begin with the raw amino-acid sequence, 182 residues long: Large ribosomal subunit protein bL25 (182 aa).

The protein belongs to the bacterial ribosomal protein bL25 family. CTC subfamily. As to quaternary structure, part of the 50S ribosomal subunit; part of the 5S rRNA/L5/L18/L25 subcomplex. Contacts the 5S rRNA. Binds to the 5S rRNA independently of L5 and L18.

Functionally, this is one of the proteins that binds to the 5S RNA in the ribosome where it forms part of the central protuberance. In Borreliella burgdorferi (strain ATCC 35210 / DSM 4680 / CIP 102532 / B31) (Borrelia burgdorferi), this protein is Large ribosomal subunit protein bL25.